The chain runs to 100 residues: Large ribosomal subunit protein bL27 (100 aa).

A propeptide spanning residues 1–9 (MIIMNLQIF) is cleaved from the precursor. The tract at residues 13 to 32 (KGMGSSKNGRDSESKRLGTK) is disordered.

The protein belongs to the bacterial ribosomal protein bL27 family. In terms of processing, the N-terminus is cleaved by ribosomal processing cysteine protease Prp.

The sequence is that of Large ribosomal subunit protein bL27 from Clostridium kluyveri (strain ATCC 8527 / DSM 555 / NBRC 12016 / NCIMB 10680 / K1).